The primary structure comprises 305 residues: uncharacterized protein (305 aa).

Helical transmembrane passes span 11-31 (LLLA…KAAL), 37-57 (LLFA…VALP), 70-90 (IYLV…TIGL), 97-117 (LFSA…WLWL), 126-146 (VIGL…GFGG), 148-168 (ISVI…LGTV), 180-200 (IWMV…SGFW), 217-237 (LLFI…TLVG), 244-264 (VASY…IFLH), and 265-285 (EPLT…ICLV). 2 EamA domains span residues 18–141 (IMWG…VISA) and 161–287 (VSWA…LVNT).

Belongs to the EamA transporter family.

The protein resides in the cell membrane. This is an uncharacterized protein from Bacillus subtilis (strain 168).